The primary structure comprises 317 residues: Retinol dehydrogenase 16 (317 aa).

Phenylalanine 33–leucine 57 contacts NAD(+). Residue serine 164 participates in substrate binding. The active-site Proton acceptor is tyrosine 176. A helical transmembrane segment spans residues leucine 289–valine 309.

This sequence belongs to the short-chain dehydrogenases/reductases (SDR) family. As to quaternary structure, homodimer. Post-translationally, not N-glycosylated. In terms of tissue distribution, highly expressed in adult liver (at protein level). Detected in endometrium, liver and foreskin. Detected in the spineous layers of adult skin, and at lower levels in basal and granular skin layers. Detected in fetal liver and lung.

The protein resides in the microsome membrane. The protein localises to the endoplasmic reticulum membrane. It carries out the reaction all-trans-retinol--[retinol-binding protein] + NAD(+) = all-trans-retinal--[retinol-binding protein] + NADH + H(+). The enzyme catalyses all-trans-retinol + NAD(+) = all-trans-retinal + NADH + H(+). It catalyses the reaction 13-cis-retinol + NAD(+) = 13-cis-retinal + NADH + H(+). The catalysed reaction is 11-cis-retinol + NAD(+) = 11-cis-retinal + NADH + H(+). It carries out the reaction 9-cis-retinol + NAD(+) = 9-cis-retinal + NADH + H(+). The enzyme catalyses 5alpha-androstane-3alpha,17beta-diol + NAD(+) = 17beta-hydroxy-5alpha-androstan-3-one + NADH + H(+). It catalyses the reaction androsterone + NAD(+) = 5alpha-androstan-3,17-dione + NADH + H(+). It functions in the pathway cofactor metabolism; retinol metabolism. With respect to regulation, inhibited by citral, perillyl alcohol, geraniol, farnesol and geranyl geraniol. Its function is as follows. Oxidoreductase with a preference for NAD. Oxidizes all-trans-retinol, 9-cis-retinol, 11-cis-retinol and 13-cis-retinol to the corresponding aldehydes. Has higher activity towards CRBP-bound retinol than with free retinol. Also oxidizes 3-alpha-hydroxysteroids. Oxidizes androstanediol and androsterone to dihydrotestosterone and androstanedione. Can also catalyze the reverse reaction. The polypeptide is Retinol dehydrogenase 16 (Homo sapiens (Human)).